Reading from the N-terminus, the 2196-residue chain is Non-reducing polyketide synthase CTB1 (2196 aa).

The tract at residues 11–250 (AFGDQTYDCS…TRLPITAPYH (240 aa)) is N-terminal acylcarrier protein transacylase domain (SAT). The Ketosynthase family 3 (KS3) domain occupies 381–814 (KSPIAILAAS…GGNTCLVLED (434 aa)). Residues Cys553, His688, and His733 each act as for beta-ketoacyl synthase activity in the active site. Residues 922–1223 (AFTGQGSAFA…QTFASINKDK (302 aa)) form a malonyl-CoA:ACP transacylase (MAT) domain region. The product template (PT) domain stretch occupies residues 1298 to 1611 (SSSIHKVITN…VPKRLMHYIV (314 aa)). Positions 1302–1441 (HKVITNTITA…EKTALKSAAL (140 aa)) are N-terminal hotdog fold. Residues 1302–1608 (HKVITNTITA…LQGVPKRLMH (307 aa)) enclose the PKS/mFAS DH domain. The Proton acceptor; for dehydratase activity role is filled by His1335. Residues 1460-1608 (TYRFSKGMIY…LQGVPKRLMH (149 aa)) are C-terminal hotdog fold. The active-site Proton donor; for dehydratase activity is the Asp1520. The tract at residues 1617 to 1666 (KASGPPTEKKTSSPPVEKKASAPVAPTRPAIQRKNASIPPPATQVTPQNK) is disordered. Residues 1623–1636 (TEKKTSSPPVEKKA) are compositionally biased toward basic and acidic residues. Carrier domains lie at 1671 to 1748 (PSVS…TRLS) and 1775 to 1857 (DPSP…SGST). O-(pantetheine 4'-phosphoryl)serine is present on residues Ser1708 and Ser1816. Polar residues predominate over residues 1856-1867 (STESFDSTTTKP). Residues 1856–1923 (STESFDSTTT…PPKGRIPPAW (68 aa)) are disordered. Residues 1872–1887 (ATPPLTDSSASSPPSS) are compositionally biased toward low complexity. A thioesterase (TE) domain region spans residues 1937-2187 (ILFLFPDGAG…SGAQMLVEHM (251 aa)).

Requires pantetheine 4'-phosphate as cofactor.

The catalysed reaction is 6 malonyl-CoA + acetyl-CoA + 6 H(+) = nor-toralactone + 6 CO2 + 7 CoA + 2 H2O. It functions in the pathway mycotoxin biosynthesis. Functionally, polyketide synthase; part of the gene cluster that mediates the biosynthesis of cercosporin, a light-activated, non-host-selective toxin. The perylenequinone chromophore of cercosporin absorbs light energy to attain an electronically-activated triplet state and produces active oxygen species such as the hydroxyl radical, superoxide, hydrogen peroxide or singlet oxygen upon reaction with oxygen molecules. These reactive oxygen species cause damage to various cellular components including lipids, proteins and nucleic acids. The first step of cercosporin biosynthesis is performed by the polyketide synthase CTB1 which catalyzes the formation of nor-toralactone. The starter unit acyltransferase (SAT) domain of CTB1 initiates polyketide extension by the selective utilization of acetyl-CoA, which is elongated to the heptaketide in the beta-ketoacyl synthase (KS) domain by successive condensations with six malonyl units introduced by the malonyl acyltransferase (MAT) domain. The product template (PT) domain catalyzes C4-C9 and C2-C11 aldol cyclizations and dehydrations to a trihydroxynaphthalene, which is thought to be delivered to the thioesterase (TE) domain for product release. The bifunctional enzyme CTB3 then methylates nor-toralactone to toralactone before conducting an unusual oxidative aromatic ring opening. The O-methyltransferase CTB2 further methylates the nascent OH-6 of the CBT3 product, blocking further oxidation at this site before the reductase CTB6 reduces the 2-oxopropyl ketone at position C7, giving naphthalene. The FAD-dependent monooxygenase CTB5 in concert with the multicopper oxidase CTB12 are responsible for homodimerization of naphthalene with CTB7 installing the dioxepine moiety, finally producing cercosporin. The fasciclin domain-containing protein CTB11 might act with CTB5 and CTB12 whereas the roles of CTB9 and CTB10 have still to be elucidated. The chain is Non-reducing polyketide synthase CTB1 from Cercospora nicotianae (Barn spot disease fungus).